Reading from the N-terminus, the 138-residue chain is MRHNKSGRKLGRTAAHRKAMLRNMARSLLIHERIRTTEHKAKELRGVVEQLVTLAQTDSVHARRMAYKVLENHQLVARLFNEIGPRFTGQPGGYTRVVKMSLPRAGDCAAMAIIELTKLAGAAPAGQEQAPKDASSEA.

Belongs to the bacterial ribosomal protein bL17 family. Part of the 50S ribosomal subunit. Contacts protein L32.

This Solidesulfovibrio magneticus (strain ATCC 700980 / DSM 13731 / RS-1) (Desulfovibrio magneticus) protein is Large ribosomal subunit protein bL17.